The sequence spans 633 residues: ATP-dependent clpX-like chaperone, mitochondrial (633 aa).

The N-terminal 56 residues, 1–56 (MSSCGACTCGAAAARLLTTSLTSAQRGISCGRIHVPVLGRLGTLDTQILRRAPLRT), are a transit peptide targeting the mitochondrion. The interval 65–101 (ASKDGTNKDGSGDGNKKSVTEGSSKKSGSGNSGKGGN) is disordered. Residues 69 to 83 (GTNKDGSGDGNKKSV) are compositionally biased toward basic and acidic residues. The span at 84 to 93 (TEGSSKKSGS) shows a compositional bias: low complexity. The ClpX-type ZB domain maps to 93–146 (SGNSGKGGNQLRCPKCGDLCTHVETFVSSTRFVKCEKCHHFFVVLSEADSKKSI). The Zn(2+) site is built by cysteine 105, cysteine 108, cysteine 127, and cysteine 130. Residue 294 to 301 (PTGSGKTL) participates in ATP binding. Residue lysine 437 is modified to N6-acetyllysine. Over residues 598-610 (KEPGYIRAPSKES) the composition is skewed to basic and acidic residues. The disordered stretch occupies residues 598–633 (KEPGYIRAPSKESSEEDYDSGVEEDGWPRQADAANS). Residues 611 to 622 (SEEDYDSGVEED) are compositionally biased toward acidic residues. Phosphoserine is present on serine 617.

It belongs to the ClpX chaperone family. Homohexamer that forms a ring structure; this hexamerization requires ATP binding. Component of the ClpXP complex formed by the assembly of two CLPP heptameric rings with two CLPX hexameric rings, giving rise to a symmetrical structure with two central CLPP rings flanked by a CLPX ring at either end of the complex. Interacts with TFAM.

It localises to the mitochondrion. The protein resides in the mitochondrion matrix. The protein localises to the mitochondrion nucleoid. It catalyses the reaction ATP + H2O = ADP + phosphate + H(+). In terms of biological role, ATP-dependent chaperone that functions as an unfoldase. As part of the ClpXP protease complex, it recognizes specific protein substrates, unfolds them using energy derived from ATP hydrolysis, and then translocates them to the proteolytic subunit (CLPP) of the ClpXP complex for degradation. Thanks to its chaperone activity, it also functions in the incorporation of the pyridoxal phosphate cofactor into 5-aminolevulinate synthase, thereby activating 5-aminolevulinate (ALA) synthesis, the first step in heme biosynthesis. This chaperone is also involved in the control of mtDNA nucleoid distribution, by regulating mitochondrial transcription factor A (TFAM) activity. The polypeptide is ATP-dependent clpX-like chaperone, mitochondrial (Rattus norvegicus (Rat)).